The following is a 423-amino-acid chain: Glutamyl-tRNA reductase (423 aa).

Residues 49–52 (TCNR), Ser-109, 114–116 (EGQ), and Gln-120 each bind substrate. Residue Cys-50 is the Nucleophile of the active site. Position 189 to 194 (189 to 194 (GAGETG)) interacts with NADP(+).

The protein belongs to the glutamyl-tRNA reductase family. In terms of assembly, homodimer.

The catalysed reaction is (S)-4-amino-5-oxopentanoate + tRNA(Glu) + NADP(+) = L-glutamyl-tRNA(Glu) + NADPH + H(+). It participates in porphyrin-containing compound metabolism; protoporphyrin-IX biosynthesis; 5-aminolevulinate from L-glutamyl-tRNA(Glu): step 1/2. The protein operates within porphyrin-containing compound metabolism; chlorophyll biosynthesis. Functionally, catalyzes the NADPH-dependent reduction of glutamyl-tRNA(Glu) to glutamate 1-semialdehyde (GSA). In Chlorobium limicola (strain DSM 245 / NBRC 103803 / 6330), this protein is Glutamyl-tRNA reductase.